A 261-amino-acid chain; its full sequence is Protein phosphatase inhibitor 2 (261 aa).

Basic and acidic residues predominate over residues 1 to 16; the sequence is MNKDEEFLEEHHYKDD. Residues 1–150 form a required for binding to pppB region; the sequence is MNKDEEFLEE…TPYHYYESEE (150 aa). Residues 1-261 form a disordered region; it reads MNKDEEFLEE…LNANLSDDEQ (261 aa). Positions 17–60 are enriched in acidic residues; it reads DAIEGEEEQGEEEESDLDDDMYNIDGETNDDDDDDEAEDEESSE. Over residues 123-134 the composition is skewed to polar residues; that stretch reads LTINDMNKSSTM. Positions 150 to 242 form a coiled coil; it reads EETDESKKYL…KKFDNLRKAH (93 aa). Over residues 154–163 the composition is skewed to basic and acidic residues; it reads ESKKYLENKF. The span at 195–206 shows a compositional bias: basic residues; it reads DKKKKKKNLKIH. A compositionally biased stretch (acidic residues) spans 212–225; that stretch reads DDNDDNEDEDEDET. A compositionally biased stretch (basic and acidic residues) spans 226-250; the sequence is EEKKENKKKFDNLRKAHYNEFKVVR.

This sequence belongs to the protein phosphatase inhibitor 2 family. As to quaternary structure, interacts with pppB.

Inhibitor of protein-phosphatase 1 (PP1). The sequence is that of Protein phosphatase inhibitor 2 (dpiA) from Dictyostelium discoideum (Social amoeba).